Here is a 162-residue protein sequence, read N- to C-terminus: MSKKNSKNKAGSNTIALNRSARHEYFIEEKIEAGLSLQGWEVKSLRAGKANISEAYVIFRDGEAYLFGSSFLPLQAASSHVVCDPTRTRKLLLSRRELDKLESLIARQGYTVVPLALYWKQCWVKVEIGLVKGKKEHDKREDTKAREWDREKARIMKNKHRG.

The segment covering 137–154 (HDKREDTKAREWDREKAR) has biased composition (basic and acidic residues). A disordered region spans residues 137–162 (HDKREDTKAREWDREKARIMKNKHRG).

The protein belongs to the SmpB family.

The protein localises to the cytoplasm. Functionally, required for rescue of stalled ribosomes mediated by trans-translation. Binds to transfer-messenger RNA (tmRNA), required for stable association of tmRNA with ribosomes. tmRNA and SmpB together mimic tRNA shape, replacing the anticodon stem-loop with SmpB. tmRNA is encoded by the ssrA gene; the 2 termini fold to resemble tRNA(Ala) and it encodes a 'tag peptide', a short internal open reading frame. During trans-translation Ala-aminoacylated tmRNA acts like a tRNA, entering the A-site of stalled ribosomes, displacing the stalled mRNA. The ribosome then switches to translate the ORF on the tmRNA; the nascent peptide is terminated with the 'tag peptide' encoded by the tmRNA and targeted for degradation. The ribosome is freed to recommence translation, which seems to be the essential function of trans-translation. The chain is SsrA-binding protein from Aeromonas hydrophila subsp. hydrophila (strain ATCC 7966 / DSM 30187 / BCRC 13018 / CCUG 14551 / JCM 1027 / KCTC 2358 / NCIMB 9240 / NCTC 8049).